A 103-amino-acid chain; its full sequence is Small ribosomal subunit protein uS10 (103 aa).

Belongs to the universal ribosomal protein uS10 family. As to quaternary structure, part of the 30S ribosomal subunit.

In terms of biological role, involved in the binding of tRNA to the ribosomes. The polypeptide is Small ribosomal subunit protein uS10 (Laribacter hongkongensis (strain HLHK9)).